The primary structure comprises 146 residues: Hemoglobin A/D subunit beta (146 aa).

A Globin domain is found at 2–146; the sequence is HWTSEEKQYI…VAHALALGYH (145 aa). Histidine 63 and histidine 92 together coordinate heme b.

It belongs to the globin family. As to quaternary structure, hemoglobins A and D are heterotetramers of alpha-1, alpha-2 and two identical beta chains. Red blood cells.

Its function is as follows. Involved in oxygen transport from the lung to the various peripheral tissues. This is Hemoglobin A/D subunit beta from Aldabrachelys gigantea (Aldabra giant tortoise).